The primary structure comprises 513 residues: ATP synthase subunit alpha (513 aa).

An ATP-binding site is contributed by 171 to 178 (GDRQIGKT).

Belongs to the ATPase alpha/beta chains family. As to quaternary structure, F-type ATPases have 2 components, CF(1) - the catalytic core - and CF(0) - the membrane proton channel. CF(1) has five subunits: alpha(3), beta(3), gamma(1), delta(1), epsilon(1). CF(0) has three main subunits: a(1), b(2) and c(9-12). The alpha and beta chains form an alternating ring which encloses part of the gamma chain. CF(1) is attached to CF(0) by a central stalk formed by the gamma and epsilon chains, while a peripheral stalk is formed by the delta and b chains.

It localises to the cell inner membrane. The catalysed reaction is ATP + H2O + 4 H(+)(in) = ADP + phosphate + 5 H(+)(out). In terms of biological role, produces ATP from ADP in the presence of a proton gradient across the membrane. The alpha chain is a regulatory subunit. This Wolbachia sp. subsp. Drosophila simulans (strain wRi) protein is ATP synthase subunit alpha.